The sequence spans 287 residues: Undecaprenyl-diphosphatase (287 aa).

7 consecutive transmembrane segments (helical) span residues 6–26, 45–65, 85–105, 111–131, 204–224, 238–258, and 265–285; these read LYLI…FIPV, SGKV…MWIF, AFTR…AIFI, VFYH…IMLW, ATEF…TYDL, AIAV…RAVL, and TYRG…AWLM.

Belongs to the UppP family.

The protein localises to the cell inner membrane. The catalysed reaction is di-trans,octa-cis-undecaprenyl diphosphate + H2O = di-trans,octa-cis-undecaprenyl phosphate + phosphate + H(+). Functionally, catalyzes the dephosphorylation of undecaprenyl diphosphate (UPP). Confers resistance to bacitracin. This Bordetella petrii (strain ATCC BAA-461 / DSM 12804 / CCUG 43448) protein is Undecaprenyl-diphosphatase.